Here is a 412-residue protein sequence, read N- to C-terminus: Aurora kinase (412 aa).

A disordered region spans residues 94-119 (NEKVRPSKSSHIPVKSPIRKKGHSPA). The Protein kinase domain occupies 148–401 (FEIGKVLGKG…LAEVMNHPWI (254 aa)). ATP contacts are provided by residues 154–162 (LGKGKLGKV) and Lys177. Asp271 acts as the Proton acceptor in catalysis.

This sequence belongs to the protein kinase superfamily. Ser/Thr protein kinase family. Aurora subfamily.

The protein resides in the nucleus. It localises to the cytoplasm. It is found in the cytoskeleton. Its subcellular location is the spindle. The protein localises to the chromosome. The protein resides in the centromere. It localises to the kinetochore. The catalysed reaction is L-seryl-[protein] + ATP = O-phospho-L-seryl-[protein] + ADP + H(+). It catalyses the reaction L-threonyl-[protein] + ATP = O-phospho-L-threonyl-[protein] + ADP + H(+). Functionally, component of the chromosomal passenger complex (CPC), a complex that acts as a key regulator of chromosome segregation and cytokinesis. Has a role in error-correction of aberrent kinetochore-microtubule attachments to ensure that sister kinetochores become bioriented and connect to opposite poles by promoting spindle assembly checkpoint signaling. The polypeptide is Aurora kinase (IPL1) (Debaryomyces hansenii (strain ATCC 36239 / CBS 767 / BCRC 21394 / JCM 1990 / NBRC 0083 / IGC 2968) (Yeast)).